A 148-amino-acid chain; its full sequence is Large ribosomal subunit protein uL15 (148 aa).

Residues 1–10 (MQLHNLEYKK) show a composition bias toward basic and acidic residues. Residues 1 to 42 (MQLHNLEYKKGSRNHKEKRVGRGHGSGLGKTSGRGQDGQKAR) form a disordered region. Over residues 11–22 (GSRNHKEKRVGR) the composition is skewed to basic residues. Residues 23–36 (GHGSGLGKTSGRGQ) show a composition bias toward gly residues.

Belongs to the universal ribosomal protein uL15 family. As to quaternary structure, part of the 50S ribosomal subunit.

Functionally, binds to the 23S rRNA. In Ureaplasma parvum serovar 3 (strain ATCC 27815 / 27 / NCTC 11736), this protein is Large ribosomal subunit protein uL15.